The chain runs to 290 residues: S-methyl-5'-thioadenosine phosphorylase 2 (290 aa).

Residues Ser-14, 57–58 (RH), and 90–91 (SA) contribute to the phosphate site. Substrate is bound at residue Met-185. Residue Ser-186 coordinates phosphate. 209–211 (DYD) contributes to the substrate binding site.

It belongs to the PNP/MTAP phosphorylase family. MTAP subfamily. In terms of assembly, homotrimer.

It is found in the cytoplasm. Its subcellular location is the nucleus. It carries out the reaction S-methyl-5'-thioadenosine + phosphate = 5-(methylsulfanyl)-alpha-D-ribose 1-phosphate + adenine. Its pathway is amino-acid biosynthesis; L-methionine biosynthesis via salvage pathway; S-methyl-5-thio-alpha-D-ribose 1-phosphate from S-methyl-5'-thioadenosine (phosphorylase route): step 1/1. Its function is as follows. Catalyzes the reversible phosphorylation of S-methyl-5'-thioadenosine (MTA) to adenine and 5-methylthioribose-1-phosphate. Involved in the breakdown of MTA, a major by-product of polyamine biosynthesis. Responsible for the first step in the methionine salvage pathway after MTA has been generated from S-adenosylmethionine. Has broad substrate specificity with 6-aminopurine nucleosides as preferred substrates. The chain is S-methyl-5'-thioadenosine phosphorylase 2 from Puccinia graminis f. sp. tritici (strain CRL 75-36-700-3 / race SCCL) (Black stem rust fungus).